A 247-amino-acid polypeptide reads, in one-letter code: MVDREQLVQKARLAEQAERYDDMAAAMKNVTELNEPLSNEERNLLSVAYKNVVGARRSSWRVISSIEQKTSADGNEKKIEMVRAYREKIEKELEAVCQDVLSLLDNYLIKNCSETQYESKVFYLKMKGDYYRYLAEVATGEKRATVVESSEKAYSEAHEISKEHMQPTHPIRLGLALNYSVFYYEIQNAPEQACHLAKTAFDDAIAELDTLNEDSYKDSTLIMQLLRDNLTLWTSDQQDDDGGEGNN.

Met-1 bears the N-acetylmethionine; in 14-3-3 protein gamma; alternate; partial mark. Position 2 is an N-acetylvaline; in 14-3-3 protein gamma, N-terminally processed; partial (Val-2). Val-2 is subject to N-acetylvaline; partial. The tract at residues 2 to 166 is required for interaction with SPATA18/MIEAP (isoform 2) but dispensable for binding to SPATA18/MIEAP (isoform 1); it reads VDREQLVQKA…AHEISKEHMQ (165 aa). The tract at residues 2–247 is interaction with SPATA18/MIEAP; the sequence is VDREQLVQKA…QDDDGGEGNN (246 aa). Residue Ser-71 is modified to Phosphoserine. Tyr-133 carries the phosphotyrosine modification. Thr-145 is modified (phosphothreonine). A Phosphoserine modification is found at Ser-215. Position 234 is a phosphothreonine (Thr-234). Residue Ser-235 is modified to Phosphoserine.

This sequence belongs to the 14-3-3 family. Homodimer. Part of a complex that contains DSG3, PKP1, YAP1 and YWHAG; the complex is required for localization of DSG3 and YAP1 to the cell membrane in keratinocytes. Interacts with SAMSN1. Interacts with RAF1, SSH1 and CRTC2/TORC2. Interacts with ABL1 (phosphorylated form); the interaction retains it in the cytoplasm. Interacts with GAB2. Interacts with MDM4 (phosphorylated); negatively regulates MDM4 activity toward TP53. Interacts with PKA-phosphorylated AANAT and SIRT2. Interacts with the 'Thr-369' phosphorylated form of DAPK2. Interacts with PI4KB, TBC1D22A and TBC1D22B. Interacts with SLITRK1. Interacts with LRRK2; this interaction is dependent on LRRK2 phosphorylation. Interacts with MARK2 and MARK3. Interacts with MEFV. Interacts with ENDOG, TSC2 and PIK3C3; interaction with ENDOG weakens its interaction with TSC2 and PIK3C3. Interacts with (phosphorylated) WDR24. Interacts with BEST1; this interaction promotes L-glutamate channel activity leading to the positive regulation of NMDA glutamate receptor activity through the L-glutamate secretion. Interacts with PKP1 (when phosphorylated); the interaction results in translocation of PKP1 to the cytoplasm and loss of intercellular adhesion in keratinocytes. Interacts with SPATA18/MIEAP (isoforms 1 and 2); a protein that also plays a role in MALM. Phosphorylated by various PKC isozymes. Highly expressed in brain, skeletal muscle, and heart.

It localises to the cytoplasm. The protein localises to the cytosol. Its subcellular location is the mitochondrion matrix. Its function is as follows. Adapter protein implicated in the regulation of a large spectrum of both general and specialized signaling pathways. Binds to a large number of partners, usually by recognition of a phosphoserine or phosphothreonine motif. Binding generally results in the modulation of the activity of the binding partner. Promotes inactivation of WDR24 component of the GATOR2 complex by binding to phosphorylated WDR24. Participates in the positive regulation of NMDA glutamate receptor activity by promoting the L-glutamate secretion through interaction with BEST1. Reduces keratinocyte intercellular adhesion, via interacting with PKP1 and sequestering it in the cytoplasm, thereby reducing its incorporation into desmosomes. Plays a role in mitochondrial protein catabolic process (also named MALM) that promotes the degradation of damaged proteins inside mitochondria. The sequence is that of 14-3-3 protein gamma from Homo sapiens (Human).